Here is a 509-residue protein sequence, read N- to C-terminus: Histone deacetylase 2 (509 aa).

A histone deacetylase region spans residues 24-338 (RRVCYFYDPE…WCYETGVALG (315 aa)). His-158 (proton donor/acceptor) is an active-site residue. Zn(2+) contacts are provided by Asp-193, His-195, and Asp-281. Residues 394–509 (PSVQFEERIP…NAKNEPGSSL (116 aa)) are disordered. Basic and acidic residues-rich tracts occupy residues 398–409 (FEERIPETKLPE), 418–434 (DERHDPDSDMLLDDHKP), and 448–472 (VKREITETETKDQHGKRLTTEHKVP). Residues 481–494 (SSKQVPTADANSMA) show a composition bias toward polar residues.

It belongs to the histone deacetylase family. HD Type 1 subfamily. The cofactor is Zn(2+). In terms of tissue distribution, expressed in roots.

The protein resides in the nucleus. The catalysed reaction is N(6)-acetyl-L-lysyl-[histone] + H2O = L-lysyl-[histone] + acetate. Its function is as follows. Responsible for the deacetylation of lysine residues on the N-terminal part of the core histones (H2A, H2B, H3 and H4). Histone deacetylation gives a tag for epigenetic repression and plays an important role in transcriptional regulation, cell cycle progression and developmental events. Histone deacetylases act via the formation of large multiprotein complexes. In Oryza sativa subsp. japonica (Rice), this protein is Histone deacetylase 2.